The sequence spans 156 residues: MPRKGSVPKRDVLPDPIHNSKLVTKLINKIMLDGKRGTAQRILYSAFDIVQERSGRDAIEVFEEAINNIMPVLEVKARRVGGSNYQVPVEVRPERRTTLGLRWLVNYSRLRGEKTMEERLANEILDAANNTGGAVKKREDTHKMAEANKAFAHYRW.

Belongs to the universal ribosomal protein uS7 family. Part of the 30S ribosomal subunit. Contacts proteins S9 and S11.

One of the primary rRNA binding proteins, it binds directly to 16S rRNA where it nucleates assembly of the head domain of the 30S subunit. Is located at the subunit interface close to the decoding center, probably blocks exit of the E-site tRNA. The polypeptide is Small ribosomal subunit protein uS7 (Staphylococcus carnosus (strain TM300)).